The following is a 316-amino-acid chain: Methionyl-tRNA formyltransferase (316 aa).

109 to 112 (SLLP) lines the (6S)-5,6,7,8-tetrahydrofolate pocket.

Belongs to the Fmt family.

It carries out the reaction L-methionyl-tRNA(fMet) + (6R)-10-formyltetrahydrofolate = N-formyl-L-methionyl-tRNA(fMet) + (6S)-5,6,7,8-tetrahydrofolate + H(+). Its function is as follows. Attaches a formyl group to the free amino group of methionyl-tRNA(fMet). The formyl group appears to play a dual role in the initiator identity of N-formylmethionyl-tRNA by promoting its recognition by IF2 and preventing the misappropriation of this tRNA by the elongation apparatus. This Idiomarina loihiensis (strain ATCC BAA-735 / DSM 15497 / L2-TR) protein is Methionyl-tRNA formyltransferase.